Reading from the N-terminus, the 493-residue chain is Ketol-acid reductoisomerase (NADP(+)) (493 aa).

Residues 14–208 enclose the KARI N-terminal Rossmann domain; that stretch reads LDQLGRCRFM…GGDRAGVLES (195 aa). NADP(+)-binding positions include 45 to 48, Arg-68, Arg-76, Ser-78, and 108 to 110; these read CGAQ and DKQ. The active site involves His-132. Gly-158 is an NADP(+) binding site. KARI C-terminal knotted domains follow at residues 209–345 and 346–486; these read SFVA…APKA and DGIK…MTDM. Residues Asp-217, Glu-221, Glu-390, and Glu-394 each coordinate Mg(2+). Ser-415 is a substrate binding site.

It belongs to the ketol-acid reductoisomerase family. Mg(2+) is required as a cofactor.

It carries out the reaction (2R)-2,3-dihydroxy-3-methylbutanoate + NADP(+) = (2S)-2-acetolactate + NADPH + H(+). The catalysed reaction is (2R,3R)-2,3-dihydroxy-3-methylpentanoate + NADP(+) = (S)-2-ethyl-2-hydroxy-3-oxobutanoate + NADPH + H(+). The protein operates within amino-acid biosynthesis; L-isoleucine biosynthesis; L-isoleucine from 2-oxobutanoate: step 2/4. It functions in the pathway amino-acid biosynthesis; L-valine biosynthesis; L-valine from pyruvate: step 2/4. Functionally, involved in the biosynthesis of branched-chain amino acids (BCAA). Catalyzes an alkyl-migration followed by a ketol-acid reduction of (S)-2-acetolactate (S2AL) to yield (R)-2,3-dihydroxy-isovalerate. In the isomerase reaction, S2AL is rearranged via a Mg-dependent methyl migration to produce 3-hydroxy-3-methyl-2-ketobutyrate (HMKB). In the reductase reaction, this 2-ketoacid undergoes a metal-dependent reduction by NADPH to yield (R)-2,3-dihydroxy-isovalerate. This chain is Ketol-acid reductoisomerase (NADP(+)), found in Mannheimia succiniciproducens (strain KCTC 0769BP / MBEL55E).